Consider the following 630-residue polypeptide: Pentatricopeptide repeat-containing protein At1g26460, mitochondrial (630 aa).

The N-terminal 115 residues, 1–115, are a transit peptide targeting the mitochondrion; that stretch reads MASHLFTRSR…RALSETLDMN (115 aa). The disordered stretch occupies residues 42 to 79; it reads LLATESTDHDPSNHQSTSTPLPPNPATGSPLYQENWRS. Positions 67–77 are enriched in polar residues; the sequence is ATGSPLYQENW. 6 PPR repeats span residues 154 to 189, 190 to 224, 227 to 261, 468 to 503, 504 to 538, and 539 to 573; these read DVNL…SVEP, NTAS…GKDS, DDES…GYML, SVAA…GLTP, NIDS…GVKP, and DSRT…GFEP.

Belongs to the PPR family. P subfamily.

Its subcellular location is the mitochondrion. The polypeptide is Pentatricopeptide repeat-containing protein At1g26460, mitochondrial (Arabidopsis thaliana (Mouse-ear cress)).